Reading from the N-terminus, the 334-residue chain is Biotin synthase (334 aa).

In terms of domain architecture, Radical SAM core spans 48 to 275 (NQVQTSQLLS…RSMVRLSAGR (228 aa)). 3 residues coordinate [4Fe-4S] cluster: cysteine 63, cysteine 67, and cysteine 70. Residues cysteine 107, cysteine 138, cysteine 198, and arginine 270 each coordinate [2Fe-2S] cluster.

It belongs to the radical SAM superfamily. Biotin synthase family. In terms of assembly, homodimer. It depends on [4Fe-4S] cluster as a cofactor. [2Fe-2S] cluster is required as a cofactor.

It catalyses the reaction (4R,5S)-dethiobiotin + (sulfur carrier)-SH + 2 reduced [2Fe-2S]-[ferredoxin] + 2 S-adenosyl-L-methionine = (sulfur carrier)-H + biotin + 2 5'-deoxyadenosine + 2 L-methionine + 2 oxidized [2Fe-2S]-[ferredoxin]. The protein operates within cofactor biosynthesis; biotin biosynthesis; biotin from 7,8-diaminononanoate: step 2/2. Its function is as follows. Catalyzes the conversion of dethiobiotin (DTB) to biotin by the insertion of a sulfur atom into dethiobiotin via a radical-based mechanism. This is Biotin synthase from Maricaulis maris (strain MCS10) (Caulobacter maris).